The chain runs to 216 residues: MGWIRGRRSRHSWEMSEFHNYNLDLKKSDFSTRWQKQRCPVVKSKCRENASPFFFCCFIAVAMGIRFIIMVTIWSAVFLNSLFNQEVQIPLTESYCGPCPKNWICYKNNCYQFFDESKNWYESQASCMSQNASLLKVYSKEDQDLLKLVKSYHWMGLVHIPTNGSWQWEDGSILSPNLLTIIEMQKGDCALYASSFKGYIENCSTPNTYICMQRTV.

Over 1–51 the chain is Cytoplasmic; that stretch reads MGWIRGRRSRHSWEMSEFHNYNLDLKKSDFSTRWQKQRCPVVKSKCRENAS. Residues 52–72 traverse the membrane as a helical; Signal-anchor for type II membrane protein segment; it reads PFFFCCFIAVAMGIRFIIMVT. The Extracellular portion of the chain corresponds to 73-216; that stretch reads IWSAVFLNSL…NTYICMQRTV (144 aa). 4 cysteine pairs are disulfide-bonded: C96/C105, C99/C110, C127/C211, and C189/C203. One can recognise a C-type lectin domain in the interval 98–213; it reads PCPKNWICYK…STPNTYICMQ (116 aa). 3 N-linked (GlcNAc...) asparagine glycosylation sites follow: N131, N163, and N202.

In terms of assembly, homodimer; disulfide-linked. Heterohexamer composed of two subunits of KLRK1 and four subunits of HCST/DAP10. Interacts (via transmembrane domain) with HCST/DAP10 (via transmembrane domain); the interaction is required for KLRK1 NK cell surface and induces NK cell-mediated cytotoxicity. Does not interact with TYROBP. Interacts with CEACAM1; recruits PTPN6 that dephosphorylates VAV1. Expressed in natural killer (NK) cells, CD8(+) alpha-beta and gamma-delta T-cells. Expressed on essentially all CD56+CD3- NK cells from freshly isolated PBMC. Expressed in interferon-producing killer dendritic cells (IKDCs).

Its subcellular location is the cell membrane. Functionally, functions as an activating and costimulatory receptor involved in immunosurveillance upon binding to various cellular stress-inducible ligands displayed at the surface of autologous tumor cells and virus-infected cells. Provides both stimulatory and costimulatory innate immune responses on activated killer (NK) cells, leading to cytotoxic activity. Acts as a costimulatory receptor for T-cell receptor (TCR) in CD8(+) T-cell-mediated adaptive immune responses by amplifying T-cell activation. Stimulates perforin-mediated elimination of ligand-expressing tumor cells. Signaling involves calcium influx, culminating in the expression of TNF-alpha. Participates in NK cell-mediated bone marrow graft rejection. May play a regulatory role in differentiation and survival of NK cells. Binds to ligands belonging to various subfamilies of MHC class I-related glycoproteins including MICA, MICB, RAET1E, RAET1G, RAET1L/ULBP6, ULBP1, ULBP2, ULBP3 (ULBP2&gt;ULBP1&gt;ULBP3) and ULBP4. This chain is NKG2-D type II integral membrane protein (KLRK1), found in Homo sapiens (Human).